The following is a 143-amino-acid chain: D-aminoacyl-tRNA deacylase (143 aa).

A Gly-cisPro motif, important for rejection of L-amino acids motif is present at residues 135-136 (GP).

This sequence belongs to the DTD family. In terms of assembly, homodimer.

It is found in the cytoplasm. It carries out the reaction glycyl-tRNA(Ala) + H2O = tRNA(Ala) + glycine + H(+). The enzyme catalyses a D-aminoacyl-tRNA + H2O = a tRNA + a D-alpha-amino acid + H(+). Its function is as follows. An aminoacyl-tRNA editing enzyme that deacylates mischarged D-aminoacyl-tRNAs. Also deacylates mischarged glycyl-tRNA(Ala), protecting cells against glycine mischarging by AlaRS. Acts via tRNA-based rather than protein-based catalysis; rejects L-amino acids rather than detecting D-amino acids in the active site. By recycling D-aminoacyl-tRNA to D-amino acids and free tRNA molecules, this enzyme counteracts the toxicity associated with the formation of D-aminoacyl-tRNA entities in vivo and helps enforce protein L-homochirality. In Mycobacterium bovis (strain ATCC BAA-935 / AF2122/97), this protein is D-aminoacyl-tRNA deacylase.